We begin with the raw amino-acid sequence, 302 residues long: L-threonate dehydrogenase (302 aa).

Residues 7-35 (FHVGIVGLGSMGMGAALSYVRAGLSTWGA) and T102 contribute to the NAD(+) site. Residue K178 is part of the active site. K246 is an NAD(+) binding site.

It belongs to the HIBADH-related family. L-threonate dehydrogenase subfamily.

It carries out the reaction L-threonate + NAD(+) = 2-dehydro-L-erythronate + NADH + H(+). Its function is as follows. Catalyzes oxidation of L-threonate to 2-oxo-tetronate. Can use either NAD(+) or NADP(+) as cosubstrate, with a preference for NAD(+). This Escherichia coli (strain K12) protein is L-threonate dehydrogenase.